Here is a 184-residue protein sequence, read N- to C-terminus: GTP cyclohydrolase 1 (184 aa).

The Zn(2+) site is built by C75, H78, and C146.

This sequence belongs to the GTP cyclohydrolase I family. In terms of assembly, homomer.

The catalysed reaction is GTP + H2O = 7,8-dihydroneopterin 3'-triphosphate + formate + H(+). The protein operates within cofactor biosynthesis; 7,8-dihydroneopterin triphosphate biosynthesis; 7,8-dihydroneopterin triphosphate from GTP: step 1/1. In Streptococcus pneumoniae serotype 19F (strain G54), this protein is GTP cyclohydrolase 1.